We begin with the raw amino-acid sequence, 269 residues long: Thiazole synthase (269 aa).

The active-site Schiff-base intermediate with DXP is lysine 112. 1-deoxy-D-xylulose 5-phosphate-binding positions include glycine 173, alanine 199–glycine 200, and asparagine 221–threonine 222.

The protein belongs to the ThiG family. In terms of assembly, homotetramer. Forms heterodimers with either ThiH or ThiS.

Its subcellular location is the cytoplasm. It catalyses the reaction [ThiS sulfur-carrier protein]-C-terminal-Gly-aminoethanethioate + 2-iminoacetate + 1-deoxy-D-xylulose 5-phosphate = [ThiS sulfur-carrier protein]-C-terminal Gly-Gly + 2-[(2R,5Z)-2-carboxy-4-methylthiazol-5(2H)-ylidene]ethyl phosphate + 2 H2O + H(+). The protein operates within cofactor biosynthesis; thiamine diphosphate biosynthesis. Catalyzes the rearrangement of 1-deoxy-D-xylulose 5-phosphate (DXP) to produce the thiazole phosphate moiety of thiamine. Sulfur is provided by the thiocarboxylate moiety of the carrier protein ThiS. In vitro, sulfur can be provided by H(2)S. The protein is Thiazole synthase of Caulobacter vibrioides (strain ATCC 19089 / CIP 103742 / CB 15) (Caulobacter crescentus).